The sequence spans 300 residues: Ribosomal RNA small subunit methyltransferase H (300 aa).

Residues 38–40 (GGH), glutamate 55, isoleucine 85, aspartate 102, and histidine 109 each bind S-adenosyl-L-methionine.

It belongs to the methyltransferase superfamily. RsmH family.

It is found in the cytoplasm. The catalysed reaction is cytidine(1402) in 16S rRNA + S-adenosyl-L-methionine = N(4)-methylcytidine(1402) in 16S rRNA + S-adenosyl-L-homocysteine + H(+). Functionally, specifically methylates the N4 position of cytidine in position 1402 (C1402) of 16S rRNA. This chain is Ribosomal RNA small subunit methyltransferase H, found in Brachyspira hyodysenteriae (strain ATCC 49526 / WA1).